We begin with the raw amino-acid sequence, 181 residues long: Germinal center-associated signaling and motility protein (181 aa).

A Phosphoserine modification is found at serine 102. Residues 117-128 (AERHKESSRGTE) are compositionally biased toward basic and acidic residues. The segment at 117–181 (AERHKESSRG…PYETHFSYPQ (65 aa)) is disordered. Position 150 is a phosphotyrosine (tyrosine 150).

As to quaternary structure, interacts with ACTB and MYH2; the interaction with MYH2 is increased by IL6-induced phosphorylation. Interacts (via C-terminus) with ARHGEF11 (via DH domain). Interacts with ARHGEF12. Interacts with SYK; the interaction increases after B-cell receptor stimulation, resulting in enhanced SYK autophosphorylation and activity. Post-translationally, phosphorylation on tyrosine residues can be induced by IL6. Phosphorylation is mediated by LYN. In terms of processing, targeted by the ubiquitin E3 ligase subunit FBXO10 to mediate its ubiquitination and degradation. Highly expressed in normal germinal center (GC) B-cells. Expressed in spleen and, to a lesser extent, bone marrow.

It is found in the cytoplasm. The protein resides in the cell membrane. Involved in the negative regulation of lymphocyte motility. It mediates the migration-inhibitory effects of IL6. Serves as a positive regulator of the RhoA signaling pathway. Enhancement of RhoA activation results in inhibition of lymphocyte and lymphoma cell motility by activation of its downstream effector ROCK. Is a regulator of B-cell receptor signaling, that acts through SYK kinase activation. This Mus musculus (Mouse) protein is Germinal center-associated signaling and motility protein (Gcsam).